Consider the following 1073-residue polypeptide: Ubiquitin carboxyl-terminal hydrolase 53 (1073 aa).

The 322-residue stretch at 30–351 folds into the USP domain; sequence KGLLNEPGQN…QPLLLFYANP (322 aa). The active-site Nucleophile is C41. H66, C68, C73, C76, H132, C144, C149, H152, C165, C168, C224, and C228 together coordinate Zn(2+). H301 acts as the Proton acceptor in catalysis. 2 disordered regions span residues 391–437 and 485–636; these read LKEN…HIDQ and LSHF…PKQK. Residues 407 to 418 are compositionally biased toward polar residues; it reads KFPTDNISSSNR. Residues 524–541 are compositionally biased toward low complexity; sequence QSRASAQIISSSKSQILA. Residues 553 to 563 are compositionally biased toward polar residues; that stretch reads DNGTGYDTDSS. Over residues 612 to 627 the composition is skewed to low complexity; it reads NISNKPKSSKDPSFSN.

The protein belongs to the peptidase C19 family. Interacts (via the C-terminal region) with the heterodimer TJP1:TJP2. Expressed predominantly in skeletal muscle and heart.

The protein resides in the cell junction. It is found in the tight junction. The enzyme catalyses Thiol-dependent hydrolysis of ester, thioester, amide, peptide and isopeptide bonds formed by the C-terminal Gly of ubiquitin (a 76-residue protein attached to proteins as an intracellular targeting signal).. In terms of biological role, deubiquitinase that mediates 'Lys-63'-linked deubiquitination of tight junction proteins, such as MARVELD2 and LSR, and which is involved in the survival of auditory hair cells and hearing. Specifically cleaves 'Lys-63'-linked polyubiquitin chains composed of at least 3 ubiquitin molecules, while it is not able to deubiquitinate substrates with shorter ubiquitin chains: recognizes ubiquitin chain in position S2 and catalyzes en bloc cleavage of polyubiquitin chains from substrate proteins. Probably acts by modulating the barrier properties and mechanical stability of tight junctions via deubiquitination of MARVELD2 and LSR. The chain is Ubiquitin carboxyl-terminal hydrolase 53 from Homo sapiens (Human).